The chain runs to 119 residues: GVWQFAYMIAKYTGRNPLDYWGYGCWCGLGGKGNPVDAVDRCCYVHDVCYNSITQGPRPTCSRIAPYHKNYYFTGKKCSTGWLTSKCGRAICACDIAAVKCFRRNHFNKKYRLYKKNIC.

6 disulfide bridges follow: Cys25-Cys119, Cys27-Cys43, Cys42-Cys101, Cys49-Cys94, Cys61-Cys87, and Cys78-Cys92. Positions 28 and 30 each coordinate Ca(2+). His46 is a catalytic residue. Asp47 lines the Ca(2+) pocket. The active site involves Asp95.

It belongs to the phospholipase A2 family. Homodimer. Ca(2+) is required as a cofactor.

It is found in the secreted. Its subcellular location is the nematocyst. The enzyme catalyses a 1,2-diacyl-sn-glycero-3-phosphocholine + H2O = a 1-acyl-sn-glycero-3-phosphocholine + a fatty acid + H(+). Functionally, sea anemone phospholipase A2 (PLA2). When incubated with plasma, this protein shows a moderate anticoagulant activity (0.15 ug of enzyme/200 uL of plasma), inhibiting clotting induced by thrombin. This enzyme also induces myotoxicity, and edema. PLA2 catalyzes the calcium-dependent hydrolysis of the 2-acyl groups in 3-sn-phosphoglycerides. This chain is Phospholipase A2 A2-actitoxin-Cgg2a, found in Condylactis gigantea (Giant Caribbean anemone).